A 362-amino-acid polypeptide reads, in one-letter code: Golgi-resident adenosine 3',5'-bisphosphate 3'-phosphatase (362 aa).

Methionine 1 carries the N-acetylmethionine modification. Residues 1 to 12 (MAPMGIRLSPLG) are Cytoplasmic-facing. Residues 13-33 (VAVFCLLGLGVLYHLYSGFLA) form a helical membrane-spanning segment. Residues 34–362 (GRFSLFGLGG…LPDLEKTGHK (329 aa)) are Lumenal-facing. A disordered region spans residues 88–109 (RESNVLHEKSKGKTREGADDKM). The active-site Proton acceptor is aspartate 113. Mg(2+) contacts are provided by glutamate 136, aspartate 177, leucine 179, and aspartate 180. Catalysis depends on threonine 182, which acts as the Proton acceptor. AMP contacts are provided by serine 245 and histidine 248. An N-linked (GlcNAc...) asparagine glycan is attached at asparagine 262. Residues glycine 271 and lysine 275 each coordinate AMP. A Mg(2+)-binding site is contributed by aspartate 303.

Belongs to the inositol monophosphatase superfamily. Mg(2+) is required as a cofactor. In terms of processing, contains N-linked glycan resistant to endoglycosydase H.

The protein localises to the golgi apparatus. Its subcellular location is the trans-Golgi network membrane. The catalysed reaction is adenosine 3',5'-bisphosphate + H2O = AMP + phosphate. It functions in the pathway sulfur metabolism. With respect to regulation, strongly inhibited by lithium. Its function is as follows. Exhibits 3'-nucleotidase activity toward adenosine 3',5'-bisphosphate (PAP), namely hydrolyzes adenosine 3',5'-bisphosphate into adenosine 5'-monophosphate (AMP) and a phosphate. May play a role in the formation of skeletal elements derived through endochondral ossification, possibly by clearing adenosine 3',5'-bisphosphate produced by Golgi sulfotransferases during glycosaminoglycan sulfation. Has no activity toward 3'-phosphoadenosine 5'-phosphosulfate (PAPS) or inositol phosphate (IP) substrates including I(1)P, I(1,4)P2, I(1,3,4)P3, I(1,4,5)P3 and I(1,3,4,5)P4. The chain is Golgi-resident adenosine 3',5'-bisphosphate 3'-phosphatase (BPNT2) from Bos taurus (Bovine).